Here is a 323-residue protein sequence, read N- to C-terminus: Olfactory receptor 6T1 (323 aa).

The Extracellular portion of the chain corresponds to 1 to 25 (MNPENWTQVTSFVLLGFPSSHLIQF). The N-linked (GlcNAc...) asparagine glycan is linked to asparagine 5. A helical transmembrane segment spans residues 26 to 46 (LVFLGLMVTYIVTATGKLLII). Over 47–54 (VLSWIDQR) the chain is Cytoplasmic. The chain crosses the membrane as a helical span at residues 55–75 (LHIQMYFFLRNFSFLELLLVT). Over 76–99 (VVVPKMLVVILTGDHTISFVSCII) the chain is Extracellular. A disulfide bond links cysteine 97 and cysteine 189. Residues 100–120 (QSYLYFFLGTTDFFLLAVMSL) traverse the membrane as a helical segment. At 121–139 (DRYLAICRPLRYETLMNGH) the chain is on the cytoplasmic side. Residues 140–160 (VCSQLVLASWLAGFLWVLCPT) traverse the membrane as a helical segment. At 161–197 (VLMASLPFCGPNGIDHFFRDSWPLLRLSCGDTHLLKL) the chain is on the extracellular side. The helical transmembrane segment at 198–217 (VAFMLSTLVLLGSLALTSVS) threads the bilayer. The Cytoplasmic portion of the chain corresponds to 218 to 237 (YACILATVLRAPTAAERRKA). A helical membrane pass occupies residues 238-258 (FSTCASHLTVVVIIYGSSIFL). At 259 to 271 (YIRMSEAQSKLLN) the chain is on the extracellular side. Residues 272 to 292 (KGASVLSCIITPLLNPFIFTL) form a helical membrane-spanning segment. Topologically, residues 293-323 (RNDKVQQALREALGWPRLTAVMKLRVTSQRK) are cytoplasmic.

It belongs to the G-protein coupled receptor 1 family.

Its subcellular location is the cell membrane. Odorant receptor. The chain is Olfactory receptor 6T1 (OR6T1) from Homo sapiens (Human).